Here is a 360-residue protein sequence, read N- to C-terminus: Aminomethyltransferase (360 aa).

It belongs to the GcvT family. In terms of assembly, the glycine cleavage system is composed of four proteins: P, T, L and H.

The enzyme catalyses N(6)-[(R)-S(8)-aminomethyldihydrolipoyl]-L-lysyl-[protein] + (6S)-5,6,7,8-tetrahydrofolate = N(6)-[(R)-dihydrolipoyl]-L-lysyl-[protein] + (6R)-5,10-methylene-5,6,7,8-tetrahydrofolate + NH4(+). The glycine cleavage system catalyzes the degradation of glycine. This Pseudomonas aeruginosa (strain ATCC 15692 / DSM 22644 / CIP 104116 / JCM 14847 / LMG 12228 / 1C / PRS 101 / PAO1) protein is Aminomethyltransferase.